The following is a 226-amino-acid chain: UPF0319 protein YpAngola_A3206 (226 aa).

The N-terminal stretch at 1–20 (MKLGLVAGMLAVCFSFSSVA) is a signal peptide.

Belongs to the UPF0319 family.

This is UPF0319 protein YpAngola_A3206 from Yersinia pestis bv. Antiqua (strain Angola).